Reading from the N-terminus, the 321-residue chain is Acyl-CoA 5-desaturase AL21 (321 aa).

A run of 2 helical transmembrane segments spans residues 42–62 (IFHI…PFTF) and 64–84 (WSAF…GTTL). Positions 87, 92, 124, 127, and 128 each coordinate Fe cation. Positions 87 to 92 (HRNLTH) match the Histidine box-1 motif. The short motif at 124-128 (HRYHH) is the Histidine box-2 element. A helical transmembrane segment spans residues 190–210 (LQAALLYMFGGFPFIVWGMAV). Residues His227, His256, His259, and His260 each contribute to the Fe cation site. The Histidine box-3 signature appears at 256–260 (HNNHH).

This sequence belongs to the fatty acid desaturase type 1 family. Fe(2+) serves as cofactor.

The protein localises to the membrane. It catalyses the reaction (11Z,14Z)-eicosadienoyl-CoA + AH2 + O2 = (5Z,11Z,14Z)-eicosatrienoyl-CoA + A + 2 H2O. The enzyme catalyses (11Z,14Z,17Z)-eicosatrienoyl-CoA + AH2 + O2 = (5Z,11Z,14Z,17Z)-eicosatetraenoyl-CoA + A + 2 H2O. It participates in lipid metabolism; polyunsaturated fatty acid biosynthesis. In terms of biological role, catalyzes the desaturation of 20:2Delta(11,14) and 20:3Delta(11,14,17) to generate sciadonic acid (20:3Delta(5,11,14)) and juniperonic acid (20:4Delta(5,11,14,17)). The enzyme can also use 16:0 and 18:0 as substrates. In Anemone leveillei (Windflower), this protein is Acyl-CoA 5-desaturase AL21.